We begin with the raw amino-acid sequence, 145 residues long: S-adenosylmethionine synthase 2 (145 aa).

ATP-binding positions include 6–7 (RK), Ala23, Lys27, and Lys31. Lys31 lines the L-methionine pocket.

This sequence belongs to the AdoMet synthase family. As to quaternary structure, homotetramer. Requires Mn(2+) as cofactor. The cofactor is Mg(2+). It depends on Co(2+) as a cofactor. K(+) is required as a cofactor. In terms of tissue distribution, mainly in floral buds and roots.

It is found in the cytoplasm. The catalysed reaction is L-methionine + ATP + H2O = S-adenosyl-L-methionine + phosphate + diphosphate. It functions in the pathway amino-acid biosynthesis; S-adenosyl-L-methionine biosynthesis; S-adenosyl-L-methionine from L-methionine: step 1/1. In terms of biological role, catalyzes the formation of S-adenosylmethionine from methionine and ATP. The reaction comprises two steps that are both catalyzed by the same enzyme: formation of S-adenosylmethionine (AdoMet) and triphosphate, and subsequent hydrolysis of the triphosphate. In Petroselinum crispum (Parsley), this protein is S-adenosylmethionine synthase 2 (SMS-2).